Here is a 260-residue protein sequence, read N- to C-terminus: Proteasome subunit alpha (260 aa).

The segment at 241–260 (VEAEEVPEKEEDYSELDSNY) is disordered. Positions 242–260 (EAEEVPEKEEDYSELDSNY) are enriched in acidic residues.

It belongs to the peptidase T1A family. In terms of assembly, the 20S proteasome core is composed of 14 alpha and 14 beta subunits that assemble into four stacked heptameric rings, resulting in a barrel-shaped structure. The two inner rings, each composed of seven catalytic beta subunits, are sandwiched by two outer rings, each composed of seven alpha subunits. The catalytic chamber with the active sites is on the inside of the barrel. Has a gated structure, the ends of the cylinder being occluded by the N-termini of the alpha-subunits. Is capped at one or both ends by the proteasome regulatory ATPase, PAN.

It localises to the cytoplasm. With respect to regulation, the formation of the proteasomal ATPase PAN-20S proteasome complex, via the docking of the C-termini of PAN into the intersubunit pockets in the alpha-rings, triggers opening of the gate for substrate entry. Interconversion between the open-gate and close-gate conformations leads to a dynamic regulation of the 20S proteasome proteolysis activity. Its function is as follows. Component of the proteasome core, a large protease complex with broad specificity involved in protein degradation. This chain is Proteasome subunit alpha, found in Thermococcus sibiricus (strain DSM 12597 / MM 739).